Here is a 539-residue protein sequence, read N- to C-terminus: Eukaryotic translation initiation factor 3 subunit L (539 aa).

A PCI domain is found at T306 to H514.

Belongs to the eIF-3 subunit L family. As to quaternary structure, component of the eukaryotic translation initiation factor 3 (eIF-3) complex. The eIF-3 complex interacts with pix.

The protein resides in the cytoplasm. Its function is as follows. Component of the eukaryotic translation initiation factor 3 (eIF-3) complex, which is involved in protein synthesis of a specialized repertoire of mRNAs and, together with other initiation factors, stimulates binding of mRNA and methionyl-tRNAi to the 40S ribosome. The eIF-3 complex specifically targets and initiates translation of a subset of mRNAs involved in cell proliferation. The chain is Eukaryotic translation initiation factor 3 subunit L from Drosophila willistoni (Fruit fly).